We begin with the raw amino-acid sequence, 429 residues long: Enolase (429 aa).

(2R)-2-phosphoglycerate is bound at residue Gln-165. The active-site Proton donor is the Glu-207. Residues Asp-244, Glu-287, and Asp-314 each contribute to the Mg(2+) site. Residues Lys-339, Arg-368, Ser-369, and Lys-390 each contribute to the (2R)-2-phosphoglycerate site. The active-site Proton acceptor is Lys-339.

It belongs to the enolase family. The cofactor is Mg(2+).

The protein resides in the cytoplasm. The protein localises to the secreted. Its subcellular location is the cell surface. The enzyme catalyses (2R)-2-phosphoglycerate = phosphoenolpyruvate + H2O. It functions in the pathway carbohydrate degradation; glycolysis; pyruvate from D-glyceraldehyde 3-phosphate: step 4/5. Functionally, catalyzes the reversible conversion of 2-phosphoglycerate (2-PG) into phosphoenolpyruvate (PEP). It is essential for the degradation of carbohydrates via glycolysis. This chain is Enolase, found in Roseiflexus castenholzii (strain DSM 13941 / HLO8).